The chain runs to 900 residues: Serine-rich coiled-coil domain-containing protein 1 (900 aa).

2 disordered regions span residues 1 to 100 (MGDS…HSNM) and 156 to 178 (KSEG…QSTR). Positions 29-56 (LPSSPSSSNTVGVHSSSPSSTNSSSGST) are enriched in low complexity. Positions 81–100 (EPTNQNLSISNGAQPGHSNM) are enriched in polar residues. Positions 673–707 (MKDECSMLKLQLKEKDELISQLQEELGKVRHLQKA) form a coiled coil.

Belongs to the CCSER family.

The chain is Serine-rich coiled-coil domain-containing protein 1 (CCSER1) from Homo sapiens (Human).